Here is a 239-residue protein sequence, read N- to C-terminus: 2,3,4,5-tetrahydropyridine-2,6-dicarboxylate N-acetyltransferase (239 aa).

The protein belongs to the transferase hexapeptide repeat family. DapH subfamily.

It carries out the reaction (S)-2,3,4,5-tetrahydrodipicolinate + acetyl-CoA + H2O = L-2-acetamido-6-oxoheptanedioate + CoA. The protein operates within amino-acid biosynthesis; L-lysine biosynthesis via DAP pathway; LL-2,6-diaminopimelate from (S)-tetrahydrodipicolinate (acetylase route): step 1/3. In terms of biological role, catalyzes the transfer of an acetyl group from acetyl-CoA to tetrahydrodipicolinate. This Staphylococcus carnosus (strain TM300) protein is 2,3,4,5-tetrahydropyridine-2,6-dicarboxylate N-acetyltransferase.